Reading from the N-terminus, the 249-residue chain is DNA polymerase sliding clamp (249 aa).

It belongs to the PCNA family. As to quaternary structure, homotrimer. The subunits circularize to form a toroid; DNA passes through its center. Replication factor C (RFC) is required to load the toroid on the DNA.

Sliding clamp subunit that acts as a moving platform for DNA processing. Responsible for tethering the catalytic subunit of DNA polymerase and other proteins to DNA during high-speed replication. This Thermococcus onnurineus (strain NA1) protein is DNA polymerase sliding clamp.